The chain runs to 942 residues: Isoleucine--tRNA ligase (942 aa).

The 'HIGH' region signature appears at 58–68 (PYVNGSIHLGH). Glutamate 564 is an L-isoleucyl-5'-AMP binding site. The short motif at 605–609 (KMSKS) is the 'KMSKS' region element. ATP is bound at residue lysine 608. Residues cysteine 905, cysteine 908, cysteine 925, and cysteine 928 each coordinate Zn(2+).

This sequence belongs to the class-I aminoacyl-tRNA synthetase family. IleS type 1 subfamily. As to quaternary structure, monomer. Zn(2+) is required as a cofactor.

It is found in the cytoplasm. It catalyses the reaction tRNA(Ile) + L-isoleucine + ATP = L-isoleucyl-tRNA(Ile) + AMP + diphosphate. Functionally, catalyzes the attachment of isoleucine to tRNA(Ile). As IleRS can inadvertently accommodate and process structurally similar amino acids such as valine, to avoid such errors it has two additional distinct tRNA(Ile)-dependent editing activities. One activity is designated as 'pretransfer' editing and involves the hydrolysis of activated Val-AMP. The other activity is designated 'posttransfer' editing and involves deacylation of mischarged Val-tRNA(Ile). The protein is Isoleucine--tRNA ligase of Blochmanniella pennsylvanica (strain BPEN).